A 294-amino-acid chain; its full sequence is 4-diphosphocytidyl-2-C-methyl-D-erythritol kinase (294 aa).

The active site involves lysine 19. Position 106 to 116 (106 to 116) interacts with ATP; sequence PVASGIGGGSA. Aspartate 148 is an active-site residue.

This sequence belongs to the GHMP kinase family. IspE subfamily.

It carries out the reaction 4-CDP-2-C-methyl-D-erythritol + ATP = 4-CDP-2-C-methyl-D-erythritol 2-phosphate + ADP + H(+). It participates in isoprenoid biosynthesis; isopentenyl diphosphate biosynthesis via DXP pathway; isopentenyl diphosphate from 1-deoxy-D-xylulose 5-phosphate: step 3/6. Functionally, catalyzes the phosphorylation of the position 2 hydroxy group of 4-diphosphocytidyl-2C-methyl-D-erythritol. The protein is 4-diphosphocytidyl-2-C-methyl-D-erythritol kinase of Rhizobium etli (strain ATCC 51251 / DSM 11541 / JCM 21823 / NBRC 15573 / CFN 42).